The primary structure comprises 415 residues: Serine--tRNA ligase (415 aa).

231–233 contacts L-serine; sequence TAE. 262 to 264 contributes to the ATP binding site; the sequence is RSE. Position 285 (E285) interacts with L-serine. ATP is bound at residue 349–352; it reads EISS. Residue S383 coordinates L-serine.

The protein belongs to the class-II aminoacyl-tRNA synthetase family. Type-1 seryl-tRNA synthetase subfamily. As to quaternary structure, homodimer. The tRNA molecule binds across the dimer.

It localises to the cytoplasm. The enzyme catalyses tRNA(Ser) + L-serine + ATP = L-seryl-tRNA(Ser) + AMP + diphosphate + H(+). It catalyses the reaction tRNA(Sec) + L-serine + ATP = L-seryl-tRNA(Sec) + AMP + diphosphate + H(+). It participates in aminoacyl-tRNA biosynthesis; selenocysteinyl-tRNA(Sec) biosynthesis; L-seryl-tRNA(Sec) from L-serine and tRNA(Sec): step 1/1. Its function is as follows. Catalyzes the attachment of serine to tRNA(Ser). Is also able to aminoacylate tRNA(Sec) with serine, to form the misacylated tRNA L-seryl-tRNA(Sec), which will be further converted into selenocysteinyl-tRNA(Sec). This is Serine--tRNA ligase from Helicobacter pylori (strain J99 / ATCC 700824) (Campylobacter pylori J99).